Consider the following 101-residue polypeptide: Small ribosomal subunit protein uS14 (101 aa).

The protein belongs to the universal ribosomal protein uS14 family. As to quaternary structure, part of the 30S ribosomal subunit. Contacts proteins S3 and S10.

Its function is as follows. Binds 16S rRNA, required for the assembly of 30S particles and may also be responsible for determining the conformation of the 16S rRNA at the A site. The sequence is that of Small ribosomal subunit protein uS14 from Opitutus terrae (strain DSM 11246 / JCM 15787 / PB90-1).